Here is a 1035-residue protein sequence, read N- to C-terminus: Electrogenic sodium bicarbonate cotransporter 1 (1035 aa).

Topologically, residues 1-421 (MSSEKECLEN…FASDFYDALS (421 aa)) are cytoplasmic. Residues 192–217 (SRLFSTPDNGSPTMTHRNLTSTSLND) show a composition bias toward polar residues. Disordered regions lie at residues 192-222 (SRLF…SDKP) and 348-389 (IEPP…GDSE). Residues 376-389 (APHDDGGGGHGDSE) show a composition bias toward basic and acidic residues. A helical transmembrane segment spans residues 422-446 (IQSLSAILFIYLGTVTNAITFGGLL). Residues 447-456 (GDATENMQGV) are Extracellular-facing. The chain crosses the membrane as a helical span at residues 457-475 (LESFLGTAVSGAVFCLFGG). Q476 is a topological domain (cytoplasmic). Residues 477 to 497 (PLTILSSTGPVLVFERLLFNF) traverse the membrane as a discontinuously helical segment. The Extracellular segment spans residues 498–505 (SKDNDFDY). A helical membrane pass occupies residues 506-526 (LEFRLWIGLWSAFQCLILVAT). Over 527–540 (DASFLVKYFTRFTE) the chain is Cytoplasmic. The helical transmembrane segment at 541-564 (EGFSSLISFIFIYDAFKKMIKLAD) threads the bilayer. At 565–648 (YYPINSHFKV…GSNCKYVPDI (84 aa)) the chain is on the extracellular side. Residues N591, N596, N609, and N617 are each glycosylated (N-linked (GlcNAc...) asparagine). Residues 649–666 (TLMSFILFLGTYTCSMAL) traverse the membrane as a helical segment. Over 667–681 (KKFKTSRYFPTTARK) the chain is Cytoplasmic. Residues 682 to 701 (LISDFAIILSILIFCGLDAL) traverse the membrane as a helical segment. Residues 702-735 (LGVDTPKLIVPSEFKPTSPNRGWFVPPFGGNPWW) are Extracellular-facing. A helical transmembrane segment spans residues 736–763 (VYLAAAIPALLVTILIFMDQQITGVIVN). The Cytoplasmic portion of the chain corresponds to 764–775 (RKEHKLKKGAGY). A helical transmembrane segment spans residues 776–792 (HLDLFWVAILMVVCSFM). Position 793 (A793) is a topological domain, extracellular. A discontinuously helical membrane pass occupies residues 794-811 (LPWYVAATVISIAHIDSL). Topologically, residues 812–833 (KMETETSAPGEQPKFLGVREQR) are cytoplasmic. The chain crosses the membrane as a helical span at residues 834 to 850 (VTGTVVFLLTGLSVFMA). The Extracellular segment spans residues 851-857 (PILKFIP). Residues 858–874 (MPVLYGVFLYMGVASLN) traverse the membrane as a helical segment. The Cytoplasmic segment spans residues 875-916 (GVQFMDRLKLLLMPPKYQPDFIYLRHVPLRRVHLFTFLQVVC). Positions 917–942 (LAMLWILKSTVAAIIFPVMILALVAV) form an intramembrane region, discontinuously helical. Topologically, residues 943 to 1035 (RKAMDYFFSQ…PTFLERHTSC (93 aa)) are cytoplasmic. The tract at residues 968–1035 (KKKEDEKKKK…PTFLERHTSC (68 aa)) is disordered. The segment covering 1007-1035 (IMEKEPFLIDSKPSDRENSPTFLERHTSC) has biased composition (basic and acidic residues).

Belongs to the anion exchanger (TC 2.A.31) family. As to quaternary structure, homodimer. In terms of tissue distribution, expressed in kidney and to a lower extent in bladder, brain, intestine, large intestine and eye.

The protein localises to the basolateral cell membrane. It is found in the cell membrane. It carries out the reaction 2 hydrogencarbonate(out) + Na(+)(out) = 2 hydrogencarbonate(in) + Na(+)(in). The catalysed reaction is 3 hydrogencarbonate(out) + Na(+)(out) = 3 hydrogencarbonate(in) + Na(+)(in). Its function is as follows. Electrogenic sodium/bicarbonate cotransporter with a Na(+):HCO3(-) stoichiometry varying from 1:2 to 1:3. May regulate bicarbonate influx/efflux at the basolateral membrane of cells and regulate intracellular pH. This is Electrogenic sodium bicarbonate cotransporter 1 (SLC4A4) from Ambystoma tigrinum (Eastern tiger salamander).